Consider the following 226-residue polypeptide: Ribonuclease 3 (226 aa).

The region spanning 7–129 (LPRLCRTLGY…IIGAIYLDSD (123 aa)) is the RNase III domain. Glutamate 42 is a Mg(2+) binding site. Aspartate 46 is a catalytic residue. Positions 115 and 118 each coordinate Mg(2+). Glutamate 118 is an active-site residue. One can recognise a DRBM domain in the interval 156–226 (DAKTLLQEYL…AAQVLELLKK (71 aa)).

The protein belongs to the ribonuclease III family. As to quaternary structure, homodimer. The cofactor is Mg(2+).

The protein resides in the cytoplasm. The catalysed reaction is Endonucleolytic cleavage to 5'-phosphomonoester.. In terms of biological role, digests double-stranded RNA. Involved in the processing of primary rRNA transcript to yield the immediate precursors to the large and small rRNAs (23S and 16S). Processes some mRNAs, and tRNAs when they are encoded in the rRNA operon. Processes pre-crRNA and tracrRNA of type II CRISPR loci if present in the organism. This Shewanella oneidensis (strain ATCC 700550 / JCM 31522 / CIP 106686 / LMG 19005 / NCIMB 14063 / MR-1) protein is Ribonuclease 3.